The following is a 644-amino-acid chain: Exoribonuclease 2 (644 aa).

The 328-residue stretch at 189–516 (REDLTALDFV…NHRLLKAVIK (328 aa)) folds into the RNB domain. The S1 motif domain maps to 561–643 (GTRFAAEIVD…ETRGIIARPV (83 aa)).

It belongs to the RNR ribonuclease family. RNase II subfamily.

It localises to the cytoplasm. The catalysed reaction is Exonucleolytic cleavage in the 3'- to 5'-direction to yield nucleoside 5'-phosphates.. Involved in mRNA degradation. Hydrolyzes single-stranded polyribonucleotides processively in the 3' to 5' direction. The protein is Exoribonuclease 2 of Shigella sonnei (strain Ss046).